A 274-amino-acid chain; its full sequence is Large ribosomal subunit protein uL2cz/uL2cy (274 aa).

Residues 225–274 form a disordered region; it reads PVDHPHGGGEGRAPIGRKKPVTPWGYPALGRRSRKRKKYSDNLILRRRTK.

Belongs to the universal ribosomal protein uL2 family. Part of the 50S ribosomal subunit.

It localises to the plastid. It is found in the chloroplast. This chain is Large ribosomal subunit protein uL2cz/uL2cy (rpl2-A), found in Lotus japonicus (Lotus corniculatus var. japonicus).